A 322-amino-acid chain; its full sequence is Formimidoylglutamase (322 aa).

Residues His127, Asp163, His165, Asp167, Asp254, and Asp256 each coordinate Mn(2+).

The protein belongs to the arginase family. It depends on Mn(2+) as a cofactor.

The enzyme catalyses N-formimidoyl-L-glutamate + H2O = formamide + L-glutamate. The protein operates within amino-acid degradation; L-histidine degradation into L-glutamate; L-glutamate from N-formimidoyl-L-glutamate (hydrolase route): step 1/1. Catalyzes the conversion of N-formimidoyl-L-glutamate to L-glutamate and formamide. The chain is Formimidoylglutamase from Paraburkholderia xenovorans (strain LB400).